The sequence spans 198 residues: Protein hunchback (198 aa).

Disordered regions lie at residues 16 to 117 (SHHH…PMQS) and 152 to 198 (NDKL…KYMA). The span at 17-31 (HHHHHHHAHHSHHQH) shows a compositional bias: basic residues. Composition is skewed to low complexity over residues 35–46 (SNSNSNASSPHQ) and 68–83 (QQQQ…QQQQ). Positions 95–105 (PSPSNNDQNSP) are enriched in polar residues. Positions 179–198 (EPEKEHDLMSNSSEDMKYMA) are enriched in basic and acidic residues.

Belongs to the hunchback C2H2-type zinc-finger protein family.

It localises to the nucleus. Functionally, gap class segmentation protein that controls development of head structures. The sequence is that of Protein hunchback (hb) from Drosophila disjuncta (Fruit fly).